Reading from the N-terminus, the 466-residue chain is MNNSTNSSNNSLALTSPYKTFEVVFIVLVAGSLSLVTIIGNILVMVSIKVNRHLQTVNNYFLFSLACADLIIGVFSMNLYTLYTVIGYWPLGPVVCDLWLALDYVVSNASVMNLLIISFDRYFCVTKPLTYPVKRTTKMAGMMIAAAWVLSFILWAPAILFWQFIVGVRTVEDGECYIQFFSNAAVTFGTAIAAFYLPVIIMTVLYWHISRASKSRIKKDKKEPVANQDPVSPSLVQGRIVKPNNNNMPSSDDGLEHNKIQNGKAPRDPVTENCVQGEEKESSNDSTSVSAVASNMRDDEITQDENTVSTSLGHSKDENSKQTCIRIGTKTPKSDSCTPTNTTVEVVGSSGQNGDEKQNIVARKIVKMTKQPAKKKPPPSREKKVTRTILAILLAFIITWAPYNVMVLINTFCAPCIPNTVWTIGYWLCYINSTINPACYALCNATFKKTFKHLLMCHYKNIGATR.

Residues Met1–Glu22 lie on the Extracellular side of the membrane. N-linked (GlcNAc...) asparagine glycans are attached at residues Asn2, Asn3, Asn6, and Asn9. A helical membrane pass occupies residues Val23–Met45. Over Val46–Asn59 the chain is Cytoplasmic. A helical transmembrane segment spans residues Tyr60–Tyr80. The Extracellular segment spans residues Thr81–Asp97. A disulfide bond links Cys96 and Cys176. Residues Leu98–Phe119 form a helical membrane-spanning segment. An Important for signaling motif is present at residues Asp120–Tyr122. Over Asp120–Met139 the chain is Cytoplasmic. Residues Ala140 to Trp162 traverse the membrane as a helical segment. Over Gln163–Ala184 the chain is Extracellular. The chain crosses the membrane as a helical span at residues Ala185–Ile209. The Cytoplasmic segment spans residues Ser210 to Arg387. The segment at Lys218–Asp355 is disordered. At Ser232 the chain carries Phosphoserine. Over residues Gly254–Val270 the composition is skewed to basic and acidic residues. Polar residues-rich tracts occupy residues Asn284–Ala293, Asp304–Gly313, and Ser334–Asn353. Residues Thr388–Asn410 form a helical membrane-spanning segment. At Thr411 to Pro418 the chain is on the extracellular side. Cys413 and Cys416 are oxidised to a cystine. The chain crosses the membrane as a helical span at residues Asn419–Leu442. The short motif at Asn436–Tyr440 is the Important for signaling element. Topologically, residues Cys443–Arg466 are cytoplasmic. A phosphothreonine mark is found at Thr446, Thr450, and Thr465.

It belongs to the G-protein coupled receptor 1 family. Muscarinic acetylcholine receptor subfamily. CHRM2 sub-subfamily. Interacts with ARRB1 and ARRB2. Interacts with RACK1; the interaction regulates CHRM2 internalization. Phosphorylated in response to agonist treatment.

The protein resides in the cell membrane. It localises to the postsynaptic cell membrane. Its function is as follows. The muscarinic acetylcholine receptor mediates various cellular responses, including inhibition of adenylate cyclase, breakdown of phosphoinositides and modulation of potassium channels through the action of G proteins. Primary transducing effect is adenylate cyclase inhibition. Signaling promotes phospholipase C activity, leading to the release of inositol trisphosphate (IP3); this then triggers calcium ion release into the cytosol. The sequence is that of Muscarinic acetylcholine receptor M2 (CHRM2) from Homo sapiens (Human).